A 309-amino-acid chain; its full sequence is Methionyl-tRNA formyltransferase (309 aa).

112–115 (SLLP) contributes to the (6S)-5,6,7,8-tetrahydrofolate binding site.

It belongs to the Fmt family.

It carries out the reaction L-methionyl-tRNA(fMet) + (6R)-10-formyltetrahydrofolate = N-formyl-L-methionyl-tRNA(fMet) + (6S)-5,6,7,8-tetrahydrofolate + H(+). Attaches a formyl group to the free amino group of methionyl-tRNA(fMet). The formyl group appears to play a dual role in the initiator identity of N-formylmethionyl-tRNA by promoting its recognition by IF2 and preventing the misappropriation of this tRNA by the elongation apparatus. The chain is Methionyl-tRNA formyltransferase from Bartonella quintana (strain Toulouse) (Rochalimaea quintana).